The following is a 393-amino-acid chain: uncharacterized protein (393 aa).

The Cytoplasmic portion of the chain corresponds to 1–17 (MVSKDQTSFNKRWTLGL). Residues 18–38 (LMLGLVIILWVLSSFLINLIF) form a helical membrane-spanning segment. At 39-46 (EDDSYRKP) the chain is on the vacuolar side. A helical transmembrane segment spans residues 47 to 67 (FFITYTNTAAFIFYLFPTAKA). Over 68–132 (VVVNYKDTGR…LYETIKLSAE (65 aa)) the chain is Cytoplasmic. Serine 93 carries the post-translational modification Phosphoserine. The chain crosses the membrane as a helical span at residues 133–153 (FCILWFTANLVTNASLAFTSV). Over 154 to 156 (ASQ) the chain is Vacuolar. A helical transmembrane segment spans residues 157–176 (TILSTTSSFFTLFIGAICHV). Residues 177-182 (ESLSKS) lie on the Cytoplasmic side of the membrane. The helical transmembrane segment at 183-200 (KVLGSFISFVGIIMVTKS) threads the bilayer. The Vacuolar segment spans residues 201-219 (DSHQRYQRHIADVSGDDND). The helical transmembrane segment at 220-240 (AVQVLIGNLLALAGAVLYGVY) threads the bilayer. The Cytoplasmic segment spans residues 241–257 (STLLKREVGDETRVNMK). The helical transmembrane segment at 258–278 (IFFGFVGLFNLLFLWPSLIVL) threads the bilayer. Residues 279–292 (DFFGWEPFSLPKDP) are Vacuolar-facing. A helical membrane pass occupies residues 293-313 (KVVVIIFVNCLITFVSDFCWA). The Cytoplasmic segment spans residues 314 to 321 (KAMLLTSP). The chain crosses the membrane as a helical span at residues 322 to 342 (LTVTVGLSITIPLAMFGDVIF). Topologically, residues 343–345 (KHK) are vacuolar. The helical transmembrane segment at 346–366 (TMSALYLFGATLILGSFFIIN) threads the bilayer. The Cytoplasmic portion of the chain corresponds to 367–393 (KSSEEEHFENSITASNYESVEVPAANN).

This sequence belongs to the TPT transporter family.

The protein resides in the vacuole membrane. This is an uncharacterized protein from Saccharomyces cerevisiae (strain ATCC 204508 / S288c) (Baker's yeast).